A 357-amino-acid polypeptide reads, in one-letter code: Probable protein phosphatase 2C 60 (357 aa).

Residues R23–F329 enclose the PPM-type phosphatase domain. 4 residues coordinate Mn(2+): D57, G58, D272, and D320. Positions N331–N357 are disordered. Positions G348–N357 are enriched in basic and acidic residues.

It belongs to the PP2C family. Mg(2+) serves as cofactor. Mn(2+) is required as a cofactor.

The enzyme catalyses O-phospho-L-seryl-[protein] + H2O = L-seryl-[protein] + phosphate. The catalysed reaction is O-phospho-L-threonyl-[protein] + H2O = L-threonyl-[protein] + phosphate. This chain is Probable protein phosphatase 2C 60, found in Arabidopsis thaliana (Mouse-ear cress).